A 181-amino-acid chain; its full sequence is ATP-dependent protease subunit HslV (181 aa).

The active site involves threonine 9. Residues alanine 166, cysteine 169, and threonine 172 each contribute to the Na(+) site.

The protein belongs to the peptidase T1B family. HslV subfamily. A double ring-shaped homohexamer of HslV is capped on each side by a ring-shaped HslU homohexamer. The assembly of the HslU/HslV complex is dependent on binding of ATP.

It is found in the cytoplasm. The enzyme catalyses ATP-dependent cleavage of peptide bonds with broad specificity.. With respect to regulation, allosterically activated by HslU binding. Functionally, protease subunit of a proteasome-like degradation complex believed to be a general protein degrading machinery. The chain is ATP-dependent protease subunit HslV from Staphylococcus aureus (strain bovine RF122 / ET3-1).